The chain runs to 794 residues: Protein IQ-DOMAIN 32 (794 aa).

Residues 15–101 form a disordered region; that stretch reads CSGGDDTSAD…QSFSVDEKKS (87 aa). Composition is skewed to polar residues over residues 23-33 and 56-65; these read ADPNSTALENK and SVVSETTPAS. Phosphoserine is present on residues S78, S80, S142, S193, and S195. Polar residues predominate over residues 80–95; sequence SPDNNNVSEKQQQSFS. IQ domains are found at residues 214–242 and 243–265; these read DESV…KVIK and LQAA…CVQA. The segment at 230-241 is calmodulin-binding; sequence ARRELLRSKKVI. The disordered stretch occupies residues 277–296; sequence HSTKDGSRVSATSDKSEPNA. Position 369 is a phosphoserine (S369). The segment at 375–417 is disordered; it reads VNSDSTVENKTETDMPSYEASKVEGQNVELSETEKMSQYDSPE. S459 carries the phosphoserine modification. Disordered stretches follow at residues 472–555 and 578–794; these read ELTS…RVEA and ATSM…KWQR. Residues 473–486 are compositionally biased toward polar residues; sequence LTSSTGSNKAMTLS. Residues 487-500 are compositionally biased toward basic and acidic residues; sequence SKDDVLGEEGKTDI. S502 and S544 each carry phosphoserine. Basic and acidic residues-rich tracts occupy residues 539-555 and 585-607; these read TLEK…RVEA and EDPK…HHEP. Low complexity predominate over residues 643 to 654; it reads SQATPASQASSS. The Nuclear localization signal signature appears at 657-664; sequence ARKGKSEK. The span at 768 to 786 shows a compositional bias: polar residues; sequence NGKQVSPRIQRSASQAQQG.

The protein belongs to the IQD family. Binds to multiple calmodulin (CaM) in the presence of Ca(2+) and CaM-like proteins.

It localises to the nucleus. It is found in the cytoplasm. The protein resides in the cytoskeleton. In terms of biological role, may be involved in cooperative interactions with calmodulins or calmodulin-like proteins. Recruits calmodulin proteins to microtubules, thus being a potential scaffold in cellular signaling and trafficking. May associate with nucleic acids and regulate gene expression at the transcriptional or post-transcriptional level. The chain is Protein IQ-DOMAIN 32 from Arabidopsis thaliana (Mouse-ear cress).